A 175-amino-acid polypeptide reads, in one-letter code: Ribosome maturation factor RimM (175 aa).

Positions 103–175 constitute a PRC barrel domain; sequence EGEYYWSDLI…LLTVDWDPDF (73 aa).

It belongs to the RimM family. In terms of assembly, binds ribosomal protein uS19.

Its subcellular location is the cytoplasm. An accessory protein needed during the final step in the assembly of 30S ribosomal subunit, possibly for assembly of the head region. Essential for efficient processing of 16S rRNA. May be needed both before and after RbfA during the maturation of 16S rRNA. It has affinity for free ribosomal 30S subunits but not for 70S ribosomes. In Nitrosococcus oceani (strain ATCC 19707 / BCRC 17464 / JCM 30415 / NCIMB 11848 / C-107), this protein is Ribosome maturation factor RimM.